The chain runs to 396 residues: Elongation factor Tu (396 aa).

The region spanning 10–206 (KPHVNIGTIG…AVDESVPDPV (197 aa)) is the tr-type G domain. A G1 region spans residues 19-26 (GHVDHGKT). 19–26 (GHVDHGKT) provides a ligand contact to GTP. T26 provides a ligand contact to Mg(2+). A G2 region spans residues 62-66 (GITIN). The G3 stretch occupies residues 83-86 (DAPG). Residues 83-87 (DAPGH) and 138-141 (NKAD) contribute to the GTP site. The tract at residues 138-141 (NKAD) is G4. The interval 176–178 (SGL) is G5.

The protein belongs to the TRAFAC class translation factor GTPase superfamily. Classic translation factor GTPase family. EF-Tu/EF-1A subfamily. As to quaternary structure, monomer.

It is found in the cytoplasm. The catalysed reaction is GTP + H2O = GDP + phosphate + H(+). In terms of biological role, GTP hydrolase that promotes the GTP-dependent binding of aminoacyl-tRNA to the A-site of ribosomes during protein biosynthesis. In Arthrobacter sp. (strain FB24), this protein is Elongation factor Tu.